Consider the following 276-residue polypeptide: Undecaprenyl-diphosphatase (276 aa).

The next 6 helical transmembrane spans lie at 43–63 (RAMAFNIIIQLGAILAVVWEF), 85–105 (LNLLIAFMPAVVLGVIFADTI), 109–129 (LFNAITVATALVIGGVIMLWA), 183–203 (AATEFSFFLAMPTMVGAAVYS), 218–238 (VFAIGFVTSFIFAMIAVRGLL), and 254–274 (IAFGLLILATWQFGWIDWASA).

Belongs to the UppP family.

It is found in the cell inner membrane. The enzyme catalyses di-trans,octa-cis-undecaprenyl diphosphate + H2O = di-trans,octa-cis-undecaprenyl phosphate + phosphate + H(+). In terms of biological role, catalyzes the dephosphorylation of undecaprenyl diphosphate (UPP). Confers resistance to bacitracin. The polypeptide is Undecaprenyl-diphosphatase (Pseudomonas syringae pv. syringae (strain B728a)).